Consider the following 385-residue polypeptide: Protein kup-1 (385 aa).

Disordered regions lie at residues 1-20 (MDDELDYGSDHSIHGDVRED) and 326-385 (SLAS…PDEY). 3 stretches are compositionally biased toward basic and acidic residues: residues 8-20 (GSDHSIHGDVRED), 339-351 (RTDEKDYEKDDIV), and 364-385 (GRVERPIRERIQFPGREDPDEY).

The polypeptide is Protein kup-1 (kup-1) (Caenorhabditis elegans).